The sequence spans 331 residues: Lipoyl synthase (331 aa).

Cys74, Cys79, Cys85, Cys100, Cys104, Cys107, and Ser314 together coordinate [4Fe-4S] cluster. The 219-residue stretch at 85–303 (CFGKGTATFM…ETEAYKMGFT (219 aa)) folds into the Radical SAM core domain.

The protein belongs to the radical SAM superfamily. Lipoyl synthase family. It depends on [4Fe-4S] cluster as a cofactor.

Its subcellular location is the cytoplasm. It catalyses the reaction [[Fe-S] cluster scaffold protein carrying a second [4Fe-4S](2+) cluster] + N(6)-octanoyl-L-lysyl-[protein] + 2 oxidized [2Fe-2S]-[ferredoxin] + 2 S-adenosyl-L-methionine + 4 H(+) = [[Fe-S] cluster scaffold protein] + N(6)-[(R)-dihydrolipoyl]-L-lysyl-[protein] + 4 Fe(3+) + 2 hydrogen sulfide + 2 5'-deoxyadenosine + 2 L-methionine + 2 reduced [2Fe-2S]-[ferredoxin]. It participates in protein modification; protein lipoylation via endogenous pathway; protein N(6)-(lipoyl)lysine from octanoyl-[acyl-carrier-protein]: step 2/2. In terms of biological role, catalyzes the radical-mediated insertion of two sulfur atoms into the C-6 and C-8 positions of the octanoyl moiety bound to the lipoyl domains of lipoate-dependent enzymes, thereby converting the octanoylated domains into lipoylated derivatives. The sequence is that of Lipoyl synthase from Leptothrix cholodnii (strain ATCC 51168 / LMG 8142 / SP-6) (Leptothrix discophora (strain SP-6)).